The following is a 628-amino-acid chain: Forkhead box protein O (628 aa).

Disordered stretches follow at residues 39–77 (RARS…DSQQ), 182–205 (KSVR…RAKK), 217–269 (GLND…RLSP), 316–359 (QQQG…APGY), and 389–415 (NSVT…YSNV). Thr44 carries the phosphothreonine; by PKB/AKT1 modification. The span at 63-77 (TKASNQQLAPGDSQQ) shows a compositional bias: polar residues. A Phosphoserine modification is found at Ser75. The fork-head DNA-binding region spans 95–201 (WGNLSYADLI…ETSRYEKRRG (107 aa)). Residue Ser190 is modified to Phosphoserine; by PKB/AKT1. Polar residues-rich tracts occupy residues 221–230 (ATPSPSSSVS) and 256–265 (RASSNASSCG). Ser259 carries the post-translational modification Phosphoserine; by PKB/AKT1. 3 positions are modified to phosphoserine: Ser262, Ser263, and Ser268. A compositionally biased stretch (pro residues) spans 328-337 (SQPPPPPYQP). Low complexity predominate over residues 338–351 (PQHQQAQQQQSPYA). The span at 402–414 (SEPSSDSLNTYSN) shows a compositional bias: polar residues.

Interacts with melt.

It is found in the cytoplasm. It localises to the nucleus. Its function is as follows. Transcription factor involved in the regulation of the insulin signaling pathway. Consistently activates both the downstream target Thor\d4EBP and the feedback control target InR. Involved in negative regulation of the cell cycle, modulating cell growth and proliferation. In response to cellular stresses, such as nutrient deprivation or increased levels of reactive oxygen species, foxo is activated and inhibits growth through the action of target genes such as Thor. Foxo activated in the adult fat body can regulate lifespan in adults; an insulin peptide itself may function as one secondary messenger of insulin-regulated aging. Also regulates Lip4, homolog of human acid lipases, thereby acting as a key modulator of lipid metabolism by insulin signaling and integrates insulin responses to glucose and lipid homeostasis. This chain is Forkhead box protein O, found in Drosophila yakuba (Fruit fly).